A 94-amino-acid chain; its full sequence is DNA-binding protein HU (94 aa).

This sequence belongs to the bacterial histone-like protein family. In terms of assembly, homodimer.

In terms of biological role, histone-like DNA-binding protein which is capable of wrapping DNA to stabilize it, and thus to prevent its denaturation under extreme environmental conditions. It is essential for heterocyst differentiation. The chain is DNA-binding protein HU (hup) from Nostoc sp. (strain PCC 7120 / SAG 25.82 / UTEX 2576).